Consider the following 498-residue polypeptide: O-methyltransferase OME1 (498 aa).

A compositionally biased stretch (polar residues) spans 1–19 (MSTMALHRTASTKSDTTMA). 2 disordered regions span residues 1-23 (MSTM…CPNG) and 42-83 (HRAE…QPEY). The span at 50 to 65 (SSTSSVSTTPTSPSFS) shows a compositional bias: low complexity. S-adenosyl-L-methionine is bound at residue Asp-358. His-406 acts as the Proton acceptor in catalysis.

This sequence belongs to the class I-like SAM-binding methyltransferase superfamily. Cation-independent O-methyltransferase family.

The protein operates within secondary metabolite biosynthesis. O-methyltransferase; part of the gene cluster that mediates the biosynthesis of a tyrosine-derived cytochalasan acting as a fungal signal recognized by resistant rice plants and leads to avirulence in Pi33 resistant rice cultivars. The first step in the pathway is catalyzed by the hybrid PKS-NRPS ACE1, assisted by the enoyl reductase RAP1, that are responsible for fusion of the tyrosine precursor and the polyketide backbone. The polyketide synthase module (PKS) of ACE1 is responsible for the synthesis of the polyketide backbone and the downstream nonribosomal peptide synthetase (NRPS) amidates the carboxyl end of the polyketide with the tyrosine precursor. Because ACE1 lacks a designated enoylreductase (ER) domain, the required activity is provided the enoyl reductase RAP1. Reduction by the hydrolyase ORFZ, followed by dehydration and intra-molecular Diels-Alder cyclization by the Diels-Alderase ORF3 then yield the required isoindolone-fused macrocycle. A number of oxidative steps catalyzed by the tailoring enzymes identified within the cluster, including cytochrome P450 monooxygenases CYP1 to CYP4, the FAD-linked oxidoreductase OXR2 and the short-chain dehydrogenase/reductase OXR1, are further required to afford the final cytochalasans that confer avirulence and which have still to be identified. The monooxygenase CYP1 has been shown to be a site-selective C-18 hydroxylase whereas the function of CYP3 is the site-selective epoxidation of the C-6/C-7 olefin that is present in some intermediate compounds. Finally, SYN2 and RAP2 are not required for avirulence in Pi33 resistant rice cultivars. The protein is O-methyltransferase OME1 of Pyricularia oryzae (strain 70-15 / ATCC MYA-4617 / FGSC 8958) (Rice blast fungus).